The chain runs to 497 residues: 3-octaprenyl-4-hydroxybenzoate carboxy-lyase (497 aa).

Mn(2+) is bound at residue Asn175. Prenylated FMN-binding positions include Ile178 to Arg180, Arg192 to Leu194, and Arg197 to Gly198. Glu241 provides a ligand contact to Mn(2+). Asp290 serves as the catalytic Proton donor.

It belongs to the UbiD family. In terms of assembly, homohexamer. Prenylated FMN is required as a cofactor. Requires Mn(2+) as cofactor.

Its subcellular location is the cell membrane. It carries out the reaction a 4-hydroxy-3-(all-trans-polyprenyl)benzoate + H(+) = a 2-(all-trans-polyprenyl)phenol + CO2. The protein operates within cofactor biosynthesis; ubiquinone biosynthesis. In terms of biological role, catalyzes the decarboxylation of 3-octaprenyl-4-hydroxy benzoate to 2-octaprenylphenol, an intermediate step in ubiquinone biosynthesis. This Shigella sonnei (strain Ss046) protein is 3-octaprenyl-4-hydroxybenzoate carboxy-lyase.